Consider the following 166-residue polypeptide: Crossover junction endodeoxyribonuclease RuvC (166 aa).

Residues Asp-7, Glu-67, and Asp-140 contribute to the active site. Mg(2+) is bound by residues Asp-7, Glu-67, and Asp-140.

It belongs to the RuvC family. In terms of assembly, homodimer which binds Holliday junction (HJ) DNA. The HJ becomes 2-fold symmetrical on binding to RuvC with unstacked arms; it has a different conformation from HJ DNA in complex with RuvA. In the full resolvosome a probable DNA-RuvA(4)-RuvB(12)-RuvC(2) complex forms which resolves the HJ. It depends on Mg(2+) as a cofactor.

It is found in the cytoplasm. The catalysed reaction is Endonucleolytic cleavage at a junction such as a reciprocal single-stranded crossover between two homologous DNA duplexes (Holliday junction).. The RuvA-RuvB-RuvC complex processes Holliday junction (HJ) DNA during genetic recombination and DNA repair. Endonuclease that resolves HJ intermediates. Cleaves cruciform DNA by making single-stranded nicks across the HJ at symmetrical positions within the homologous arms, yielding a 5'-phosphate and a 3'-hydroxyl group; requires a central core of homology in the junction. The consensus cleavage sequence is 5'-(A/T)TT(C/G)-3'. Cleavage occurs on the 3'-side of the TT dinucleotide at the point of strand exchange. HJ branch migration catalyzed by RuvA-RuvB allows RuvC to scan DNA until it finds its consensus sequence, where it cleaves and resolves the cruciform DNA. In Ruminiclostridium cellulolyticum (strain ATCC 35319 / DSM 5812 / JCM 6584 / H10) (Clostridium cellulolyticum), this protein is Crossover junction endodeoxyribonuclease RuvC.